A 791-amino-acid chain; its full sequence is Ataxin-2 homolog (791 aa).

Residues 1–22 (MATRSVSMKQTSQRAASPNKTQ) show a composition bias toward polar residues. 8 disordered regions span residues 1–28 (MATR…KKWS), 60–100 (RGGV…QQRV), 112–134 (RTET…GVPL), 235–311 (TRSN…KEGQ), 326–423 (SLDS…TKLG), 452–505 (KPAP…PVSS), 613–634 (NPSQ…GNSS), and 707–791 (PMYG…EAKP). The span at 76–96 (SLASSEENVSSVSGSAKSNNS) shows a compositional bias: low complexity. 2 stretches are compositionally biased toward basic and acidic residues: residues 112-125 (RTET…RWMP) and 243-256 (NNKD…EAPH). The span at 326–337 (SLDSKQPSSTKS) shows a compositional bias: polar residues. Basic and acidic residues-rich tracts occupy residues 360–371 (DSKEPRKEEAEK) and 395–418 (SKEE…KETT). Residues 473–486 (SIPSTTPQSPSVVS) show a composition bias toward low complexity. Residues 487–497 (NGENKPSSSPV) show a composition bias toward polar residues. 2 stretches are compositionally biased toward low complexity: residues 715 to 725 (SNSQRSFNSSN) and 734 to 760 (NNNA…NTTA). Residues 774–791 (DATEKTEKDASANQEAKP) show a composition bias toward basic and acidic residues.

This sequence belongs to the ataxin-2 family. Interacts with mkt1.

The protein resides in the cytoplasm. In terms of biological role, involved in post-transcriptional regulation of gene expression, probably by association with mkt1. This is Ataxin-2 homolog from Schizosaccharomyces pombe (strain 972 / ATCC 24843) (Fission yeast).